The sequence spans 510 residues: Probable cytosol aminopeptidase (510 aa).

Residues K272 and D277 each contribute to the Mn(2+) site. K284 is a catalytic residue. Residues D296, D355, and E357 each coordinate Mn(2+). Residue R359 is part of the active site.

Belongs to the peptidase M17 family. Mn(2+) is required as a cofactor.

It localises to the cytoplasm. The catalysed reaction is Release of an N-terminal amino acid, Xaa-|-Yaa-, in which Xaa is preferably Leu, but may be other amino acids including Pro although not Arg or Lys, and Yaa may be Pro. Amino acid amides and methyl esters are also readily hydrolyzed, but rates on arylamides are exceedingly low.. It carries out the reaction Release of an N-terminal amino acid, preferentially leucine, but not glutamic or aspartic acids.. In terms of biological role, presumably involved in the processing and regular turnover of intracellular proteins. Catalyzes the removal of unsubstituted N-terminal amino acids from various peptides. This is Probable cytosol aminopeptidase from Synechococcus sp. (strain JA-3-3Ab) (Cyanobacteria bacterium Yellowstone A-Prime).